A 214-amino-acid chain; its full sequence is Urease accessory protein UreE (214 aa).

The tract at residues 163–214 (NAEPSGVDHSHEATDSGHGYGEDHDHDHSHDHNHDHDHNHDHDHSHSHDSHE) is disordered. Over residues 168-214 (GVDHSHEATDSGHGYGEDHDHDHSHDHNHDHDHNHDHDHSHSHDSHE) the composition is skewed to basic and acidic residues.

It belongs to the UreE family.

The protein localises to the cytoplasm. In terms of biological role, involved in urease metallocenter assembly. Binds nickel. Probably functions as a nickel donor during metallocenter assembly. The protein is Urease accessory protein UreE of Natronomonas pharaonis (strain ATCC 35678 / DSM 2160 / CIP 103997 / JCM 8858 / NBRC 14720 / NCIMB 2260 / Gabara) (Halobacterium pharaonis).